Here is a 907-residue protein sequence, read N- to C-terminus: Putative pentatricopeptide repeat-containing protein At5g59900 (907 aa).

22 PPR repeats span residues 103–137 (STAS…ALKP), 155–185 (SSSS…MITK), 191–225 (EVRT…GIRP), 226–260 (DVYI…GCDV), 261–295 (NIVP…DLKP), 296–330 (DVVT…RFSP), 331–365 (SEAA…GVSP), 366–400 (NLFV…GLRP), 401–435 (NDVT…GLKL), 436–470 (SVYP…KLEP), 471–505 (TVVT…GIAP), 506–540 (SIYT…NVKP), 541–575 (NRVT…GIVP), 576–610 (DTYS…NCEL), 611–645 (NEIC…GVDL), 646–680 (DLVC…GLKP), 681–715 (DDVI…GCVP), 716–750 (NEVT…SSVP), 751–782 (NQVT…ILKG), 786–820 (NTAT…GVSP), 821–855 (DCIT…GIRP), and 856–890 (DRVA…GLIP). Residues 887–907 (GLIPNNKTSRTTTSNDTSSKS) form a disordered region. Low complexity predominate over residues 891-907 (NNKTSRTTTSNDTSSKS).

Belongs to the PPR family. P subfamily.

The polypeptide is Putative pentatricopeptide repeat-containing protein At5g59900 (Arabidopsis thaliana (Mouse-ear cress)).